The chain runs to 326 residues: Tagatose 1,6-diphosphate aldolase (326 aa).

The protein belongs to the aldolase LacD family.

The catalysed reaction is D-tagatofuranose 1,6-bisphosphate = D-glyceraldehyde 3-phosphate + dihydroxyacetone phosphate. The protein operates within carbohydrate metabolism; D-tagatose 6-phosphate degradation; D-glyceraldehyde 3-phosphate and glycerone phosphate from D-tagatose 6-phosphate: step 2/2. The sequence is that of Tagatose 1,6-diphosphate aldolase from Staphylococcus aureus (strain MW2).